The chain runs to 120 residues: Urease subunit beta (120 aa).

It belongs to the urease beta subunit family. Heterotrimer of UreA (gamma), UreB (beta) and UreC (alpha) subunits. Three heterotrimers associate to form the active enzyme.

It is found in the cytoplasm. The enzyme catalyses urea + 2 H2O + H(+) = hydrogencarbonate + 2 NH4(+). The protein operates within nitrogen metabolism; urea degradation; CO(2) and NH(3) from urea (urease route): step 1/1. The chain is Urease subunit beta from Corynebacterium efficiens (strain DSM 44549 / YS-314 / AJ 12310 / JCM 11189 / NBRC 100395).